The primary structure comprises 394 residues: Phosphopentomutase (394 aa).

Mn(2+)-binding residues include Asp-14, Asp-287, His-292, Asp-328, His-329, and His-340.

The protein belongs to the phosphopentomutase family. Mn(2+) is required as a cofactor.

It localises to the cytoplasm. The enzyme catalyses 2-deoxy-alpha-D-ribose 1-phosphate = 2-deoxy-D-ribose 5-phosphate. The catalysed reaction is alpha-D-ribose 1-phosphate = D-ribose 5-phosphate. Its pathway is carbohydrate degradation; 2-deoxy-D-ribose 1-phosphate degradation; D-glyceraldehyde 3-phosphate and acetaldehyde from 2-deoxy-alpha-D-ribose 1-phosphate: step 1/2. Its function is as follows. Isomerase that catalyzes the conversion of deoxy-ribose 1-phosphate (dRib-1-P) and ribose 1-phosphate (Rib-1-P) to deoxy-ribose 5-phosphate (dRib-5-P) and ribose 5-phosphate (Rib-5-P), respectively. The chain is Phosphopentomutase from Listeria monocytogenes serotype 4a (strain HCC23).